We begin with the raw amino-acid sequence, 249 residues long: Diaminopimelate epimerase (249 aa).

Substrate contacts are provided by asparagine 11 and asparagine 60. Cysteine 69 acts as the Proton donor in catalysis. Residues 70 to 71 (GN), asparagine 164, and 182 to 183 (ER) each bind substrate. The active-site Proton acceptor is cysteine 192. 193–194 (GT) contacts substrate.

It belongs to the diaminopimelate epimerase family. Homodimer.

It is found in the cytoplasm. It carries out the reaction (2S,6S)-2,6-diaminopimelate = meso-2,6-diaminopimelate. It functions in the pathway amino-acid biosynthesis; L-lysine biosynthesis via DAP pathway; DL-2,6-diaminopimelate from LL-2,6-diaminopimelate: step 1/1. Its function is as follows. Catalyzes the stereoinversion of LL-2,6-diaminopimelate (L,L-DAP) to meso-diaminopimelate (meso-DAP), a precursor of L-lysine and an essential component of the bacterial peptidoglycan. The protein is Diaminopimelate epimerase of Campylobacter jejuni subsp. jejuni serotype O:23/36 (strain 81-176).